The following is a 149-amino-acid chain: Transcriptional repressor NrdR (149 aa).

The segment at 3–34 is a zinc-finger region; it reads CPFCSTEETKVIDSRLVSDGYQVRRRRECTKC. An ATP-cone domain is found at 49 to 139; the sequence is PKIIKNNGMR…VYLSFENINE (91 aa).

This sequence belongs to the NrdR family. The cofactor is Zn(2+).

Functionally, negatively regulates transcription of bacterial ribonucleotide reductase nrd genes and operons by binding to NrdR-boxes. This is Transcriptional repressor NrdR from Mannheimia succiniciproducens (strain KCTC 0769BP / MBEL55E).